A 278-amino-acid polypeptide reads, in one-letter code: Casein kinase II subunit beta (278 aa).

Disordered regions lie at residues 1 to 22 (MSQEFVEDYSRTGSSDDEDSGA) and 78 to 111 (DEEEDEDDVVEEDEVDQEMQSNDGHDEGKRRNKS). S2 bears the N-acetylserine mark. Residue S2 is modified to Phosphoserine. Residues 78–94 (DEEEDEDDVVEEDEVDQ) are compositionally biased toward acidic residues.

Belongs to the casein kinase 2 subunit beta family. Tetramer composed of an alpha subunit, an alpha' subunit, one beta subunit and one beta' subunit. Interacts with FACT subunits POB3 and SPT16. interacts with YTA7. Phosphorylated by alpha subunit.

Its function is as follows. Regulatory subunit of casein kinase II/CK2. As part of the kinase complex regulates the basal catalytic activity of the alpha subunit a constitutively active serine/threonine-protein kinase that phosphorylates a large number of substrates containing acidic residues C-terminal to the phosphorylated serine or threonine. The polypeptide is Casein kinase II subunit beta (CKB1) (Saccharomyces cerevisiae (strain ATCC 204508 / S288c) (Baker's yeast)).